The chain runs to 75 residues: Alpha-elapitoxin-Bc2b (75 aa).

An N-terminal signal peptide occupies residues 1 to 2 (YT). 5 cysteine pairs are disulfide-bonded: cysteine 5–cysteine 24, cysteine 17–cysteine 45, cysteine 30–cysteine 34, cysteine 49–cysteine 60, and cysteine 61–cysteine 66.

Monomer in solution, homodimer in crystal state. As to expression, expressed by the venom gland.

The protein localises to the secreted. Functionally, binds to muscular and neuronal nicotinic acetylcholine receptor (nAChR) and inhibits acetylcholine from binding to the receptor, thereby impairing neuromuscular and neuronal transmission. Blocks muscle type nAChR. Also binds with high affinity to alpha-7/CHRNA7 nAChRs. In addition, shows a weak inhibition of neuronal alpha-3-beta-2/CHRNA3-CHRNB2 nAChR. Selectively binds to alpha-1-delta subunit interface of the mouse muscle nicotinic acetylcholine receptor, with a 10-fold higher affinity for the adult than for the fetal receptors. In vivo, when intraperitoneally injected into mice, causes flaccid paralysis and respiratory distress, followed by death within 2-4 hours. The protein is Alpha-elapitoxin-Bc2b of Bungarus candidus (Malayan krait).